The primary structure comprises 1823 residues: Bromodomain-containing protein DDB_G0280777 (1823 aa).

Disordered regions lie at residues 44–83 and 200–281; these read DNNN…EEDE and LKQT…RTTS. The span at 65–77 shows a compositional bias: basic and acidic residues; it reads SNKEEEKEEKEEK. Basic residues predominate over residues 210 to 224; it reads KRRNQQHQNLLKKQK. Positions 225 to 250 are enriched in basic and acidic residues; sequence IQKEKEEREQKEKEQKEKEQKEKEEQ. Positions 251–262 are enriched in low complexity; it reads QQQLFLLQQQQQ. Residues 306-413 enclose the Bromo domain; that stretch reads EAQEEMYDQL…KKSKDLMKNV (108 aa). Disordered regions lie at residues 429-654, 753-781, 855-886, 949-993, 1055-1079, 1190-1386, 1453-1477, and 1679-1823; these read ENKN…EEQT, NCNN…NNSL, INDN…NNKP, NSSK…DEDF, LPNN…PPPS, IDPK…IQAS, QLQQ…QTPQ, and QQQQ…QKKQ. 4 stretches are compositionally biased toward low complexity: residues 432–486, 494–511, 520–555, and 570–579; these read NNNN…NTPL, CSPS…TPQS, QQQQ…ISPR, and SSSSLSSSSL. Residues 580-590 are compositionally biased toward polar residues; it reads ALNSQNENGVN. Residues 601 to 614 are compositionally biased toward basic and acidic residues; the sequence is MESEESTNVKKEEN. The span at 631 to 643 shows a compositional bias: acidic residues; the sequence is EGEEQQEQEDEEQ. Composition is skewed to low complexity over residues 753–779, 863–884, 949–958, 1055–1071, and 1205–1378; these read NCNN…NNNN, NNNN…NNNN, NSSKSNNNSN, and LPNN…TTQL. A compositionally biased stretch (low complexity) spans 1679 to 1705; sequence QQQQPQQQQQQPQQQPQQQPQQQQQPQ. Basic and acidic residues-rich tracts occupy residues 1716–1737 and 1744–1755; these read PKEK…EKDR and KTESKKESKKSL. Composition is skewed to low complexity over residues 1756–1767 and 1789–1806; these read NDSSNSDINTSV and SSKQ…TQDS. The segment covering 1813–1823 has biased composition (basic residues); that stretch reads KKKRGRPQKKQ.

This chain is Bromodomain-containing protein DDB_G0280777, found in Dictyostelium discoideum (Social amoeba).